The primary structure comprises 239 residues: 1-(5-phosphoribosyl)-5-[(5-phosphoribosylamino)methylideneamino] imidazole-4-carboxamide isomerase (239 aa).

Aspartate 8 acts as the Proton acceptor in catalysis. Residue aspartate 129 is the Proton donor of the active site.

The protein belongs to the HisA/HisF family.

The protein resides in the cytoplasm. The enzyme catalyses 1-(5-phospho-beta-D-ribosyl)-5-[(5-phospho-beta-D-ribosylamino)methylideneamino]imidazole-4-carboxamide = 5-[(5-phospho-1-deoxy-D-ribulos-1-ylimino)methylamino]-1-(5-phospho-beta-D-ribosyl)imidazole-4-carboxamide. The protein operates within amino-acid biosynthesis; L-histidine biosynthesis; L-histidine from 5-phospho-alpha-D-ribose 1-diphosphate: step 4/9. This is 1-(5-phosphoribosyl)-5-[(5-phosphoribosylamino)methylideneamino] imidazole-4-carboxamide isomerase from Bacillus cereus (strain Q1).